Here is a 172-residue protein sequence, read N- to C-terminus: ATP synthase subunit b (172 aa).

A helical membrane pass occupies residues leucine 5–serine 24.

Belongs to the ATPase B chain family. In terms of assembly, F-type ATPases have 2 components, F(1) - the catalytic core - and F(0) - the membrane proton channel. F(1) has five subunits: alpha(3), beta(3), gamma(1), delta(1), epsilon(1). F(0) has three main subunits: a(1), b(2) and c(10-14). The alpha and beta chains form an alternating ring which encloses part of the gamma chain. F(1) is attached to F(0) by a central stalk formed by the gamma and epsilon chains, while a peripheral stalk is formed by the delta and b chains.

It is found in the cell inner membrane. Its function is as follows. F(1)F(0) ATP synthase produces ATP from ADP in the presence of a proton or sodium gradient. F-type ATPases consist of two structural domains, F(1) containing the extramembraneous catalytic core and F(0) containing the membrane proton channel, linked together by a central stalk and a peripheral stalk. During catalysis, ATP synthesis in the catalytic domain of F(1) is coupled via a rotary mechanism of the central stalk subunits to proton translocation. In terms of biological role, component of the F(0) channel, it forms part of the peripheral stalk, linking F(1) to F(0). The protein is ATP synthase subunit b of Nitratiruptor sp. (strain SB155-2).